The chain runs to 1218 residues: Coatomer subunit alpha-2 (1218 aa).

WD repeat units follow at residues 7–48 (TKSN…DRFD), 49–88 (EHDG…CLFT), 91–132 (GHLD…AVLT), 133–172 (GHNH…KKSV), 202–241 (GHDR…AWEV), 246–285 (GHMN…GIQT), 288–326 (REHD…PAFS), and 363–404 (SLNQ…AGRA). A disordered region spans residues 855-876 (MANGGDGFDAEEGEANEEDGEE). The segment covering 862 to 876 (FDAEEGEANEEDGEE) has biased composition (acidic residues).

As to quaternary structure, oligomeric complex that consists of at least the alpha, beta, beta', gamma, delta, epsilon and zeta subunits.

It localises to the cytoplasm. Its subcellular location is the golgi apparatus membrane. The protein localises to the cytoplasmic vesicle. The protein resides in the COPI-coated vesicle membrane. In terms of biological role, the coatomer is a cytosolic protein complex that binds to dilysine motifs and reversibly associates with Golgi non-clathrin-coated vesicles, which further mediate biosynthetic protein transport from the ER, via the Golgi up to the trans Golgi network. Coatomer complex is required for budding from Golgi membranes, and is essential for the retrograde Golgi-to-ER transport of dilysine-tagged proteins. The chain is Coatomer subunit alpha-2 from Oryza sativa subsp. japonica (Rice).